The sequence spans 471 residues: 3-hydroxylaminophenol mutase (471 aa).

One can recognise a GS beta-grasp domain in the interval 15–100; that stretch reads NDVKFVDFRF…TCDVVEPSDG (86 aa). Residues 107 to 471 form the GS catalytic domain; the sequence is PRSIAKRAEA…PVEFEMYYSL (365 aa).

It belongs to the glutamine synthetase family.

It catalyses the reaction 3-hydroxyaminophenol = aminohydroquinone. With respect to regulation, is inhibited by H(2)O(2). 1,10-phenanthroline inhibits the activity slightly, but other metal cation chelators such as EDTA or tiron have no effect on the activity. Divalent metal cations and hydroxylamine have also no effect on the activity. Due to the relationship of the protein with glutamine synthetases, glutamate and glutamine were tested as inhibitors; neither preincubation of the compounds with the enzyme nor their addition to the assay buffer affected 3HAP mutase activity. In terms of biological role, catalyzes the isomerization of 3-hydroxylaminophenol (3HAP) to aminohydroquinone, a step in the degradative pathway of 3-nitrophenol. The enzymatic reaction is regiospecific since it leads to the formation of aminohydroquinone exclusively, without producing the isomeric 4-aminocatechol. Can also isomerize other hydroxylaminoaromatic compounds, such as hydroxylaminobenzene to a mixture of 2-aminophenol and 4-aminophenol, 4-hydroxylaminotoluene to 6-amino-m-cresol, and 2-chloro-5-hydroxylaminophenol to 2-amino-5-chlorohydroquinone. Does not act on 4-hydroxylaminobenzoate. This Cupriavidus pinatubonensis (strain JMP 134 / LMG 1197) (Cupriavidus necator (strain JMP 134)) protein is 3-hydroxylaminophenol mutase.